The following is a 148-amino-acid chain: Large ribosomal subunit protein uL15 (148 aa).

A compositionally biased stretch (basic residues) spans 1–30 (MPSRLRKTRKLRGHVSHGHGRIGKHRKHPG). A disordered region spans residues 1-37 (MPSRLRKTRKLRGHVSHGHGRIGKHRKHPGGRGNAGG). A (3S)-3-hydroxyhistidine modification is found at histidine 39. An N6-acetyllysine mark is found at lysine 47 and lysine 55. Serine 68 is subject to Phosphoserine. Lysine 110 is subject to N6-acetyllysine.

This sequence belongs to the universal ribosomal protein uL15 family. Component of the large ribosomal subunit. Post-translationally, hydroxylated on His-39 by MINA.

Its subcellular location is the cytoplasm. Its function is as follows. Component of the large ribosomal subunit. The ribosome is a large ribonucleoprotein complex responsible for the synthesis of proteins in the cell. This chain is Large ribosomal subunit protein uL15 (Rpl27a), found in Rattus norvegicus (Rat).